We begin with the raw amino-acid sequence, 434 residues long: Protein maelstrom homolog (434 aa).

Positions 4–73 form a DNA-binding region, HMG box; the sequence is RRASRNAYYF…AQGKDSGPSE (70 aa).

It belongs to the maelstrom family. In terms of assembly, interacts with SMARCB1, SIN3B and DDX4. Interacts with piRNA-associated proteins TDRD1, PIWIL1 and PIWIL2. Interacts with Tex19.1 and, probably, Tex19.2. Testis-specific. Present in spermatocytes and round and early elongating spermatids.

The protein resides in the cytoplasm. It is found in the nucleus. Its function is as follows. Plays a central role during spermatogenesis by repressing transposable elements and preventing their mobilization, which is essential for the germline integrity. Acts via the piRNA metabolic process, which mediates the repression of transposable elements during meiosis by forming complexes composed of piRNAs and Piwi proteins and governs the methylation and subsequent repression of transposons. Its association with piP-bodies suggests a participation in the secondary piRNAs metabolic process. Required for the localization of germ-cell factors to the meiotic nuage. The polypeptide is Protein maelstrom homolog (Mus musculus (Mouse)).